The following is a 269-amino-acid chain: MAAPAGAGALIASPDRRRCLWSVLAAALGLLTYGVSALEVYTPKEIFVANGTQGKLTCKFKSTNTTGTLTSVSWSFQPEGTDTTVSFFHYSQGQVYAGNYPPFKDRVSWAGDLDKKDASINIENMQFIHNGTYICDVKNPPDIVVQPGHIRLYVVEKEILPAFPVWVVVGIVTAVVLGLTLLITMILAVIYRRRNSKRDYAGCNTSENVSPVKQVSRKSPSDTEGLVKSLPSGSHQGPVIYAQLDHSGGHHSDRINKSESVVYADIRKN.

Positions 1–35 (MAAPAGAGALIASPDRRRCLWSVLAAALGLLTYGV) are cleaved as a signal peptide. One can recognise an Ig-like V-type domain in the interval 36 to 146 (SALEVYTPKE…VKNPPDIVVQ (111 aa)). At 36-162 (SALEVYTPKE…YVVEKEILPA (127 aa)) the chain is on the extracellular side. Residues asparagine 50, asparagine 64, and asparagine 130 are each glycosylated (N-linked (GlcNAc...) asparagine). Cysteine 58 and cysteine 135 are disulfide-bonded. The helical transmembrane segment at 163 to 183 (FPVWVVVGIVTAVVLGLTLLI) threads the bilayer. Over 184 to 269 (TMILAVIYRR…SVVYADIRKN (86 aa)) the chain is Cytoplasmic. Residues 202 to 238 (GCNTSENVSPVKQVSRKSPSDTEGLVKSLPSGSHQGP) are disordered. Residues 203-213 (CNTSENVSPVK) are compositionally biased toward polar residues. Residues serine 206, serine 210, serine 219, and serine 221 each carry the phosphoserine modification. The ITIM motif 1 motif lies at 239–244 (VIYAQL). Tyrosine 241 carries the post-translational modification Phosphotyrosine. Phosphoserine is present on serine 260. Residues 261-266 (VVYADI) carry the ITIM motif 2 motif. The residue at position 263 (tyrosine 263) is a Phosphotyrosine.

The protein belongs to the myelin P0 protein family. As to quaternary structure, interacts with phosphorylated PTPN11/SHP-2. Post-translationally, phosphorylated on tyrosine residues upon stimulation with pervanadate and concanavalin-A (ConA). Phosphorylation at Tyr-241 and Tyr-263 is required for interaction with PTPN11/SHP-2. Dephosphorylated by PTPN11/SHP-2 (in vitro). N-glycosylated.

The protein resides in the membrane. Its function is as follows. Cell surface receptor, which is involved in signal transduction processes. Recruits PTPN11/SHP-2 to the cell membrane and is a putative substrate of PTPN11/SHP-2. Is a major receptor for concanavalin-A (ConA) and is involved in cellular signaling induced by ConA, which probably includes Src family tyrosine-protein kinases. May be involved in regulation of integrin-mediated cell motility. This chain is Myelin protein zero-like protein 1 (MPZL1), found in Bos taurus (Bovine).